The sequence spans 213 residues: Peptidyl-tRNA hydrolase (213 aa).

A tRNA-binding site is contributed by Tyr-26. His-31 serves as the catalytic Proton acceptor. TRNA contacts are provided by Tyr-78, Asn-80, and Asn-126.

This sequence belongs to the PTH family. In terms of assembly, monomer.

Its subcellular location is the cytoplasm. The catalysed reaction is an N-acyl-L-alpha-aminoacyl-tRNA + H2O = an N-acyl-L-amino acid + a tRNA + H(+). In terms of biological role, hydrolyzes ribosome-free peptidyl-tRNAs (with 1 or more amino acids incorporated), which drop off the ribosome during protein synthesis, or as a result of ribosome stalling. Its function is as follows. Catalyzes the release of premature peptidyl moieties from peptidyl-tRNA molecules trapped in stalled 50S ribosomal subunits, and thus maintains levels of free tRNAs and 50S ribosomes. This chain is Peptidyl-tRNA hydrolase, found in Trichormus variabilis (strain ATCC 29413 / PCC 7937) (Anabaena variabilis).